Here is a 363-residue protein sequence, read N- to C-terminus: MSEAVTRIHVGGTAGTDPYEVLVGRQLLGELAGLIGDRVKRVAVVHPEALAETGEALRADLAEQGYEAVAIQVPNAEEAKTVEVAAYCWKALGQSGFTRTDVIVGVGGGATTDLAGFVAATWLRGVRWIAVPTTVLGMVDAAVGGKTGINTAEGKNLVGAFHPPAGVLCDLAALDSLPVNDYVSGLAEIIKAGFIADPAILELIEADPQAARTPAGPHTAELIERSIKVKAEVVSGDLKESGLREILNYGHTLAHAIEKNERYKWRHGAAVSVGMHFAAELGRLAGRLDDATADRHRTVLESVGLPLHYRYDQWPKLLETMKVDKKSRGDLLRFIVLDGLAKPTVLEGPDPAVLLAAYGEVGE.

Residues 109–113, 133–134, Lys146, and Lys155 contribute to the NAD(+) site; these read GATTD and TT. Residues Glu188, His251, and His267 each contribute to the Zn(2+) site.

The protein belongs to the sugar phosphate cyclases superfamily. Dehydroquinate synthase family. The cofactor is NAD(+). Requires Co(2+) as cofactor. It depends on Zn(2+) as a cofactor.

It is found in the cytoplasm. The catalysed reaction is 7-phospho-2-dehydro-3-deoxy-D-arabino-heptonate = 3-dehydroquinate + phosphate. Its pathway is metabolic intermediate biosynthesis; chorismate biosynthesis; chorismate from D-erythrose 4-phosphate and phosphoenolpyruvate: step 2/7. Its function is as follows. Catalyzes the conversion of 3-deoxy-D-arabino-heptulosonate 7-phosphate (DAHP) to dehydroquinate (DHQ). The sequence is that of 3-dehydroquinate synthase from Streptomyces avermitilis (strain ATCC 31267 / DSM 46492 / JCM 5070 / NBRC 14893 / NCIMB 12804 / NRRL 8165 / MA-4680).